Here is a 494-residue protein sequence, read N- to C-terminus: Poly(3-hydroxybutyrate) depolymerase (494 aa).

Residues methionine 1 to alanine 25 form the signal peptide. The active-site Nucleophile is serine 45. Residues aspartate 132 and histidine 166 each act as charge relay system in the active site. Residues alanine 347–alanine 431 form the Fibronectin type-III domain.

The protein belongs to the AB hydrolase superfamily. Lipase family.

The protein localises to the secreted. It carries out the reaction [(3R)-hydroxybutanoate](n) + H2O = [(3R)-hydroxybutanoate](n-2) + (3R)-hydroxybutanoate dimer + H(+). The enzyme catalyses [(3R)-hydroxybutanoate](n) + H2O = [(3R)-hydroxybutanoate](n-1) + (R)-3-hydroxybutanoate + H(+). The catalysed reaction is (3R)-hydroxybutanoate dimer + H2O = 2 (R)-3-hydroxybutanoate + H(+). In terms of biological role, catalyzes the hydrolysis of poly(3-hydroxybutyrate) (PHB) film, producing the monomer and dimer of 3-hydroxybutyrate (3HB), while the 3HB trimer and tetramer are not formed. In Delftia acidovorans (Pseudomonas acidovorans), this protein is Poly(3-hydroxybutyrate) depolymerase.